We begin with the raw amino-acid sequence, 169 residues long: Succinate dehydrogenase cytochrome b560 subunit, mitochondrial (169 aa).

Residues 1–29 (MAAFLLRHVSRHCLRAHLNAQLCIRNAAP) constitute a mitochondrion transit peptide. Residues 30–62 (LGTTAKEEMERFWKKNTSSNRPLSPHLTIYKWS) are Mitochondrial matrix-facing. Residues 63–92 (LPMALSVCHRGSGIALSGGVSLFGLSALLL) traverse the membrane as a helical segment. Residues 93-112 (PGNFESYLMFVKSLCLGPTL) are Mitochondrial intermembrane-facing. The helical transmembrane segment at 113–137 (IYSAKFVLVFPLMYHSLNGIRHLLW) threads the bilayer. Heme b is bound at residue H127. Topologically, residues 138-144 (DLGKGLA) are mitochondrial matrix. Residues 145-166 (IPQVWLSGVAVVVLAVLSSGGL) form a helical membrane-spanning segment. The Mitochondrial intermembrane portion of the chain corresponds to 167-169 (AAL).

This sequence belongs to the cytochrome b560 family. Component of complex II composed of four subunits: the flavoprotein (FP) SDHA, iron-sulfur protein (IP) SDHB, and a cytochrome b560 composed of SDHC and SDHD. The cofactor is heme b.

The protein localises to the mitochondrion inner membrane. Its pathway is carbohydrate metabolism; tricarboxylic acid cycle. Functionally, membrane-anchoring subunit of succinate dehydrogenase (SDH) that is involved in complex II of the mitochondrial electron transport chain and is responsible for transferring electrons from succinate to ubiquinone (coenzyme Q). SDH also oxidizes malate to the non-canonical enol form of oxaloacetate, enol-oxaloacetate. Enol-oxaloacetate, which is a potent inhibitor of the succinate dehydrogenase activity, is further isomerized into keto-oxaloacetate. The chain is Succinate dehydrogenase cytochrome b560 subunit, mitochondrial (Sdhc) from Mus musculus (Mouse).